The sequence spans 440 residues: GTPase Der (440 aa).

EngA-type G domains lie at alanine 5–glutamate 167 and isoleucine 178–serine 353. GTP-binding positions include glycine 11–serine 18, aspartate 58–isoleucine 62, asparagine 120–glutamate 123, glycine 184–serine 191, aspartate 231–leucine 235, and asparagine 296–aspartate 299. One can recognise a KH-like domain in the interval lysine 354–glutamine 438.

This sequence belongs to the TRAFAC class TrmE-Era-EngA-EngB-Septin-like GTPase superfamily. EngA (Der) GTPase family. In terms of assembly, associates with the 50S ribosomal subunit.

In terms of biological role, GTPase that plays an essential role in the late steps of ribosome biogenesis. This chain is GTPase Der, found in Natranaerobius thermophilus (strain ATCC BAA-1301 / DSM 18059 / JW/NM-WN-LF).